The following is a 356-amino-acid chain: Serendipity locus protein beta (356 aa).

A C2H2-type 1; degenerate zinc finger spans residues 171 to 193 (IPCHICGEMFSSQEVLERHIKAD). 5 consecutive C2H2-type zinc fingers follow at residues 201–223 (ATCN…MNLH), 229–251 (LECR…MEVH), 257–279 (YQCD…LMRH), 286–308 (LICE…LRTH), and 315–337 (YPCP…KRVH).

In terms of assembly, binds chromatin; requires N-terminal regions to form protein-protein contacts, in addition to DNA specific recognition by the zinc fingers.

Its subcellular location is the nucleus. Its function is as follows. Binds to the consensus DNA sequence 5'-YCAGAGATGCGCA-3'. In Drosophila melanogaster (Fruit fly), this protein is Serendipity locus protein beta (Sry-beta).